Reading from the N-terminus, the 360-residue chain is Phospho-N-acetylmuramoyl-pentapeptide-transferase (360 aa).

Transmembrane regions (helical) follow at residues 27–47 (IVGL…LIAW), 71–91 (TPTM…LLWA), 97–117 (YVWC…IDDY), 132–152 (WKYF…YAIG), 168–188 (VMPQ…VGTS), 199–219 (GLAI…AWAT), 236–256 (AGEL…FLWF), 263–283 (VFMG…IAVL), 288–308 (FLLV…ILQV), and 338–358 (VIVR…ATLK).

It belongs to the glycosyltransferase 4 family. MraY subfamily. The cofactor is Mg(2+).

Its subcellular location is the cell inner membrane. The enzyme catalyses UDP-N-acetyl-alpha-D-muramoyl-L-alanyl-gamma-D-glutamyl-meso-2,6-diaminopimeloyl-D-alanyl-D-alanine + di-trans,octa-cis-undecaprenyl phosphate = di-trans,octa-cis-undecaprenyl diphospho-N-acetyl-alpha-D-muramoyl-L-alanyl-D-glutamyl-meso-2,6-diaminopimeloyl-D-alanyl-D-alanine + UMP. It functions in the pathway cell wall biogenesis; peptidoglycan biosynthesis. In terms of biological role, catalyzes the initial step of the lipid cycle reactions in the biosynthesis of the cell wall peptidoglycan: transfers peptidoglycan precursor phospho-MurNAc-pentapeptide from UDP-MurNAc-pentapeptide onto the lipid carrier undecaprenyl phosphate, yielding undecaprenyl-pyrophosphoryl-MurNAc-pentapeptide, known as lipid I. The sequence is that of Phospho-N-acetylmuramoyl-pentapeptide-transferase from Proteus mirabilis (strain HI4320).